We begin with the raw amino-acid sequence, 199 residues long: 7-methyl-GTP pyrophosphatase (199 aa).

The active-site Proton acceptor is the Asp74.

This sequence belongs to the Maf family. YceF subfamily. It depends on a divalent metal cation as a cofactor.

The protein resides in the cytoplasm. The catalysed reaction is N(7)-methyl-GTP + H2O = N(7)-methyl-GMP + diphosphate + H(+). Functionally, nucleoside triphosphate pyrophosphatase that hydrolyzes 7-methyl-GTP (m(7)GTP). May have a dual role in cell division arrest and in preventing the incorporation of modified nucleotides into cellular nucleic acids. The chain is 7-methyl-GTP pyrophosphatase from Cupriavidus metallidurans (strain ATCC 43123 / DSM 2839 / NBRC 102507 / CH34) (Ralstonia metallidurans).